Here is a 394-residue protein sequence, read N- to C-terminus: MSLKSILRDLKEVRDGLGGISKRSWSKSSHIAPDQTTPPLDNIPQSPWASLPPELLHDIIWRVEESETAWPARAAVVSCASVCKSWRGITMEIVRIPEQCGKLTFPISLKQPGPRDSPIQCFIKRNRATATYILYYGLMPSETENDKLLLAARRIRRATCTDFIISLSAKNFSRSSSTYVGKLRSGFLGTKFTIYDNQTASSTAQAQPNRRLHPKQAAPKLPTNSSTVGNITYELNVLRTRGPRRMHCAMDSIPLSSVIAEPSVVQGIEEEVSSSPSPKGETITTDKEIPDNSPSLRDQPLVLKNKSPRWHEQLQCWCLNFKGRVTVASVKNFQLVAEIDASLDAPPEEHERVILQFGKIGKDIFTMDYRYPLSAFQAFAICISSFDTKPACEG.

The interval 21 to 44 (SKRSWSKSSHIAPDQTTPPLDNIP) is disordered. A compositionally biased stretch (polar residues) spans 26–44 (SKSSHIAPDQTTPPLDNIP). The F-box domain occupies 46-101 (SPWASLPPELLHDIIWRVEESETAWPARAAVVSCASVCKSWRGITMEIVRIPEQCG). Disordered stretches follow at residues 200 to 225 (ASSTAQAQPNRRLHPKQAAPKLPTNS) and 268 to 297 (IEEEVSSSPSPKGETITTDKEIPDNSPSLR).

The protein belongs to the TUB family. As to expression, ubiquitous.

This is Tubby-like F-box protein 2 from Arabidopsis thaliana (Mouse-ear cress).